A 279-amino-acid polypeptide reads, in one-letter code: Acyl-[acyl-carrier-protein]--UDP-N-acetylglucosamine O-acyltransferase (279 aa).

A disordered region spans residues A260–S279.

The protein belongs to the transferase hexapeptide repeat family. LpxA subfamily. In terms of assembly, homotrimer.

The protein localises to the cytoplasm. It catalyses the reaction a (3R)-hydroxyacyl-[ACP] + UDP-N-acetyl-alpha-D-glucosamine = a UDP-3-O-[(3R)-3-hydroxyacyl]-N-acetyl-alpha-D-glucosamine + holo-[ACP]. It functions in the pathway glycolipid biosynthesis; lipid IV(A) biosynthesis; lipid IV(A) from (3R)-3-hydroxytetradecanoyl-[acyl-carrier-protein] and UDP-N-acetyl-alpha-D-glucosamine: step 1/6. In terms of biological role, involved in the biosynthesis of lipid A, a phosphorylated glycolipid that anchors the lipopolysaccharide to the outer membrane of the cell. The protein is Acyl-[acyl-carrier-protein]--UDP-N-acetylglucosamine O-acyltransferase of Chlamydia abortus (strain DSM 27085 / S26/3) (Chlamydophila abortus).